The sequence spans 177 residues: Ribosome maturation factor RimM (177 aa).

Residues 92–166 (EDTFYHADLM…RIVVVPDTNP (75 aa)) enclose the PRC barrel domain.

This sequence belongs to the RimM family. In terms of assembly, binds ribosomal protein uS19.

Its subcellular location is the cytoplasm. Its function is as follows. An accessory protein needed during the final step in the assembly of 30S ribosomal subunit, possibly for assembly of the head region. Essential for efficient processing of 16S rRNA. May be needed both before and after RbfA during the maturation of 16S rRNA. It has affinity for free ribosomal 30S subunits but not for 70S ribosomes. The sequence is that of Ribosome maturation factor RimM from Azorhizobium caulinodans (strain ATCC 43989 / DSM 5975 / JCM 20966 / LMG 6465 / NBRC 14845 / NCIMB 13405 / ORS 571).